The sequence spans 638 residues: 1-deoxy-D-xylulose-5-phosphate synthase (638 aa).

Thiamine diphosphate is bound by residues His-79 and 120–122 (GHS). A Mg(2+)-binding site is contributed by Asp-151. Thiamine diphosphate-binding positions include 152-153 (GA), Asn-182, Tyr-291, and Glu-373. Asn-182 contributes to the Mg(2+) binding site.

The protein belongs to the transketolase family. DXPS subfamily. As to quaternary structure, homodimer. Mg(2+) serves as cofactor. Requires thiamine diphosphate as cofactor.

It catalyses the reaction D-glyceraldehyde 3-phosphate + pyruvate + H(+) = 1-deoxy-D-xylulose 5-phosphate + CO2. It functions in the pathway metabolic intermediate biosynthesis; 1-deoxy-D-xylulose 5-phosphate biosynthesis; 1-deoxy-D-xylulose 5-phosphate from D-glyceraldehyde 3-phosphate and pyruvate: step 1/1. Functionally, catalyzes the acyloin condensation reaction between C atoms 2 and 3 of pyruvate and glyceraldehyde 3-phosphate to yield 1-deoxy-D-xylulose-5-phosphate (DXP). The chain is 1-deoxy-D-xylulose-5-phosphate synthase from Xanthomonas euvesicatoria pv. vesicatoria (strain 85-10) (Xanthomonas campestris pv. vesicatoria).